Here is a 147-residue protein sequence, read N- to C-terminus: Large ribosomal subunit protein uL15 (147 aa).

Over residues 1 to 28 (MIRRRKKVRKLRGSHTHGWGCKKKHRGG) the composition is skewed to basic residues. Residues 1–43 (MIRRRKKVRKLRGSHTHGWGCKKKHRGGGSKGGRGMAGTGKRN) are disordered. The segment covering 29 to 38 (GSKGGRGMAG) has biased composition (gly residues).

It belongs to the universal ribosomal protein uL15 family. As to quaternary structure, part of the 50S ribosomal subunit.

Functionally, binds to the 23S rRNA. The protein is Large ribosomal subunit protein uL15 of Pyrococcus abyssi (strain GE5 / Orsay).